A 528-amino-acid polypeptide reads, in one-letter code: GMP synthase [glutamine-hydrolyzing] (528 aa).

Residues 13–204 enclose the Glutamine amidotransferase type-1 domain; the sequence is SILILDFGSQ…VYSIAKCKAD (192 aa). The Nucleophile role is filled by C90. Catalysis depends on residues H178 and E180. Residues 205–403 form the GMPS ATP-PPase domain; sequence WTTETFLEET…LGLPDEIIKR (199 aa). 232–238 serves as a coordination point for ATP; that stretch reads SGGVDSS.

In terms of assembly, homodimer.

The enzyme catalyses XMP + L-glutamine + ATP + H2O = GMP + L-glutamate + AMP + diphosphate + 2 H(+). The protein operates within purine metabolism; GMP biosynthesis; GMP from XMP (L-Gln route): step 1/1. Its function is as follows. Catalyzes the synthesis of GMP from XMP. The sequence is that of GMP synthase [glutamine-hydrolyzing] from Prochlorococcus marinus subsp. pastoris (strain CCMP1986 / NIES-2087 / MED4).